The chain runs to 251 residues: MQNSQAFSDSLPKHIAIIMDGNGRWAKSKGKPRVFGHKKGVNAVRKTVAAASKLGIKAMTLFAFSSENWRRPEEEVGLLMELFITVLSSEVKKLHKNNLQLRVIGDTSRFSERLQKKIVEAENLTASNTGMVINIAANYGGKWDITEAAKALALKARNGEIRVEDINEQLITEHLTMADLPEVDLLIRTSGECRISNFMLWQMAYAEMYFTPEFWPEFDEDSLVEAVTWFINRERRFGCTGEQVKALMTAQ.

Aspartate 20 is a catalytic residue. Aspartate 20 contacts Mg(2+). Substrate is bound by residues 21 to 24, tryptophan 25, arginine 33, histidine 37, and 65 to 67; these read GNGR and SSE. Asparagine 68 acts as the Proton acceptor in catalysis. Substrate is bound by residues tryptophan 69, arginine 71, arginine 188, and 194–196; that span reads RIS. Glutamate 207 contacts Mg(2+).

It belongs to the UPP synthase family. As to quaternary structure, homodimer. The cofactor is Mg(2+).

The enzyme catalyses 8 isopentenyl diphosphate + (2E,6E)-farnesyl diphosphate = di-trans,octa-cis-undecaprenyl diphosphate + 8 diphosphate. Its function is as follows. Catalyzes the sequential condensation of isopentenyl diphosphate (IPP) with (2E,6E)-farnesyl diphosphate (E,E-FPP) to yield (2Z,6Z,10Z,14Z,18Z,22Z,26Z,30Z,34E,38E)-undecaprenyl diphosphate (di-trans,octa-cis-UPP). UPP is the precursor of glycosyl carrier lipid in the biosynthesis of bacterial cell wall polysaccharide components such as peptidoglycan and lipopolysaccharide. This Vibrio parahaemolyticus serotype O3:K6 (strain RIMD 2210633) protein is Ditrans,polycis-undecaprenyl-diphosphate synthase ((2E,6E)-farnesyl-diphosphate specific).